The sequence spans 268 residues: Undecaprenyl-diphosphatase (268 aa).

A run of 7 helical transmembrane segments spans residues 7 to 27 (IFNA…PISS), 87 to 107 (LIYH…LCIY), 116 to 136 (FYSI…TEIS), 146 to 166 (IETP…WPGF), 187 to 207 (VEFS…LDVI), 210 to 230 (FYDI…SAFI), and 247 to 267 (SLIP…LFFM).

The protein belongs to the UppP family.

It localises to the cell membrane. It carries out the reaction di-trans,octa-cis-undecaprenyl diphosphate + H2O = di-trans,octa-cis-undecaprenyl phosphate + phosphate + H(+). Catalyzes the dephosphorylation of undecaprenyl diphosphate (UPP). Confers resistance to bacitracin. In Buchnera aphidicola subsp. Baizongia pistaciae (strain Bp), this protein is Undecaprenyl-diphosphatase.